A 257-amino-acid chain; its full sequence is PHD finger protein Alfin1 (257 aa).

The interval 145 to 200 is disordered; the sequence is SKDQLTAHNNGSNSKYKSSGKSRQSESQTKGVKMSAPVKEEVDSGEEEEEDDDEQG. Positions 153 to 166 are enriched in low complexity; that stretch reads NNGSNSKYKSSGKS. The segment covering 187 to 199 has biased composition (acidic residues); that stretch reads DSGEEEEEDDDEQ. A PHD-type zinc finger spans residues 200–252; sequence GATCGACGDNYGTDEFWICCDMCEKWFHGKCVKITPAKAEHIKQYKCPGCSIK.

It belongs to the Alfin family. Interacts with H3K4me3 and to a lesser extent with H3K4me2. Predominantly expressed in the roots.

Its subcellular location is the nucleus. Its function is as follows. Histone-binding component that specifically recognizes H3 tails trimethylated on 'Lys-4' (H3K4me3), which mark transcription start sites of virtually all active genes. Transcriptional regulator that binds specifically to DNA sequences 5'-GNGGTG-3' or 5'-GTGGNG-3', including promoter elements of the salt-inducible PRP2 gene. Plays a role in salinity tolerance. This is PHD finger protein Alfin1 (ALFIN-1) from Medicago sativa (Alfalfa).